Consider the following 369-residue polypeptide: MEFLERTYLVNDKAAKMYAFTLESVELQQKPVNKDQCPRERPEELESGGMYHCHSGSKPTEKGANEYAYAKWKLCSASAICFIFMIAEVVGGHIAGSLAVVTDAAHLLIDLTSFLLSLFSLWLSSKPPSKRLTFGWHRAEILGALLSILCIWVVTGVLVYLACERLLYPDYQIQATVMIIVSSCAVAANIVLTVVLHQRCLGHNHKEVQANASVRAAFVHALGDLFQSISVLISALIIYFKPEYKIADPICTFIFSILVLASTITILKDFSILLMEGVPKSLNYSGVKELILAVDGVLSVHSLHIWSLTMNQVILSAHVATAASRDSQVVRREIAKALSKSFTMHSLTIQMESPVDQDPDCLFCEDPCD.

Residues M1 to A79 lie on the Cytoplasmic side of the membrane. Positions P31–H52 are disordered. Basic and acidic residues predominate over residues V32–E44. Zn(2+) is bound by residues H52, C53, and H54. An HCH Motif; seals regulatory zinc-binding pocket motif is present at residues H52–H54. A helical transmembrane segment spans residues I80–V100. Residues V101–D103 lie on the Lumenal, vesicle side of the membrane. The chain crosses the membrane as a helical span at residues A104–S124. Positions 106, 110, and 137 each coordinate Zn(2+). The Cytoplasmic portion of the chain corresponds to S125–E140. Residues I141 to L161 traverse the membrane as a helical segment. Residues A162–A175 lie on the Lumenal, vesicle side of the membrane. Residues T176 to L196 form a helical membrane-spanning segment. Residues H197–A217 lie on the Cytoplasmic side of the membrane. The helical transmembrane segment at F218 to I238 threads the bilayer. Zn(2+) is bound by residues H220 and D224. Topologically, residues Y239–K245 are lumenal, vesicle. A helical transmembrane segment spans residues I246–I266. Residues L267 to D369 are Cytoplasmic-facing. Zn(2+)-binding residues include H301, H318, H345, E352, C361, and C364.

The protein belongs to the cation diffusion facilitator (CDF) transporter (TC 2.A.4) family. SLC30A subfamily. As to quaternary structure, homodimer. In the endocrine pancreas, expressed in insulin-producing beta cells. Expressed at relatively high levels in subcutaneous fat tissue from lean persons; much lower levels in visceral fat, whether from lean or obese individuals, and in subcutaneous fat tissue from obese individuals. Expressed in peripheral blood mononuclear cells, including T-cells and B-cells, with great variation among individuals ranging from negative to strongly positive.

It localises to the cytoplasmic vesicle. Its subcellular location is the secretory vesicle membrane. It is found in the cell membrane. The enzyme catalyses Zn(2+)(in) + 2 H(+)(out) = Zn(2+)(out) + 2 H(+)(in). Functionally, proton-coupled zinc ion antiporter mediating the entry of zinc into the lumen of pancreatic beta cell secretory granules, thereby regulating insulin secretion. In Homo sapiens (Human), this protein is Proton-coupled zinc antiporter SLC30A8.